A 204-amino-acid chain; its full sequence is Protein GrpE (204 aa).

A disordered region spans residues 1–55 (MSSKNNPESETKAKNKWEKVMEAEEEQEEGRGDGSQEMEPHREGLEFPSREKLEG). Composition is skewed to basic and acidic residues over residues 7–22 (PESETKAKNKWEKVME) and 29–55 (EGRGDGSQEMEPHREGLEFPSREKLEG).

Belongs to the GrpE family. As to quaternary structure, homodimer.

The protein resides in the cytoplasm. In terms of biological role, participates actively in the response to hyperosmotic and heat shock by preventing the aggregation of stress-denatured proteins, in association with DnaK and GrpE. It is the nucleotide exchange factor for DnaK and may function as a thermosensor. Unfolded proteins bind initially to DnaJ; upon interaction with the DnaJ-bound protein, DnaK hydrolyzes its bound ATP, resulting in the formation of a stable complex. GrpE releases ADP from DnaK; ATP binding to DnaK triggers the release of the substrate protein, thus completing the reaction cycle. Several rounds of ATP-dependent interactions between DnaJ, DnaK and GrpE are required for fully efficient folding. This is Protein GrpE from Coxiella burnetii (strain RSA 331 / Henzerling II).